A 169-amino-acid chain; its full sequence is Putative phosphoesterase BLi01284/BL02661 (169 aa).

Residue His-34 is the Proton donor of the active site. Short sequence motifs (HXTX) lie at residues 34–37 (HLTL) and 115–118 (HVTV). The active-site Proton acceptor is His-115.

This sequence belongs to the 2H phosphoesterase superfamily. YjcG family.

In Bacillus licheniformis (strain ATCC 14580 / DSM 13 / JCM 2505 / CCUG 7422 / NBRC 12200 / NCIMB 9375 / NCTC 10341 / NRRL NRS-1264 / Gibson 46), this protein is Putative phosphoesterase BLi01284/BL02661.